A 551-amino-acid chain; its full sequence is Meiotically up-regulated gene 184 protein (551 aa).

The J domain occupies 12-78 (DYYAILKLQK…TKRLIYDQLF (67 aa)). Positions 85–122 (RSQYKPNSTSNPSKHTSAYASYNKGKNSKWSSPFASTT) are enriched in polar residues. Disordered stretches follow at residues 85 to 153 (RSQY…FPRD), 176 to 226 (RQEP…SVYK), and 334 to 359 (EAESSNPFSFDFGSSGPKSRSDTRNN). The segment covering 124–133 (KPQESSEKYS) has biased composition (basic and acidic residues). The span at 134 to 146 (KKSSTRKKEHFNK) shows a compositional bias: basic residues. Basic and acidic residues-rich tracts occupy residues 176-187 (RQEPESLKKENN) and 203-219 (GPKDSSKHPSNDGKIPE).

The protein resides in the cytoplasm. The protein localises to the cytoskeleton. Its function is as follows. Has a role in sporulation. This chain is Meiotically up-regulated gene 184 protein (mug184), found in Schizosaccharomyces pombe (strain 972 / ATCC 24843) (Fission yeast).